A 322-amino-acid chain; its full sequence is Ras association domain-containing protein 4 (322 aa).

The segment at 96-161 is disordered; sequence EASPQDSKVP…SKSRAPSEAQ (66 aa). Ser142 is subject to Phosphoserine. Residues 175–264 enclose the Ras-associating domain; sequence YNHKTSVFTP…KIFLMEADLS (90 aa). Residues 271–318 form the SARAH domain; sequence VAQYIKFEMPVLDSFVEKLKEEEEREIIKLTMKFQALRLTMLQRLEQL.

Interacts directly with activated KRAS in a GTP-dependent manner.

Its function is as follows. Potential tumor suppressor. May act as a KRAS effector protein. May promote apoptosis and cell cycle arrest. In Mus musculus (Mouse), this protein is Ras association domain-containing protein 4 (Rassf4).